The primary structure comprises 380 residues: MTIPATYAAIITAAGRGTRAGDGPPKQWRPLAGQSVLERSIAAFAGFPRVVVTLAPEDMARGVAELSGPVVLVAGGATRSDSVRAALESLEGSGVTHVLIHDGARPLVSRRVIGGVIEALQSGAPAAAPALPVTDALWRAQDGCVTATASREGLFRAQTPQGFALDAILAAHRAHPEGAADDVELAIRAGLPVTVTPGDEDNLKLTWPGDFARAERILGDAMDIRLGNGFDVHAFTTGDHVWLCGVKIPHDKALLGHSDADVGMHALTDAIYGALAQGDIGRHFPPSDPQWKGAESHIFLRHAAMLARQMGYEISNADVTLICERPKVGPHAGAMALRLSEIIGVEPDRVSVKATTSERLGFTGREEGIASIATATLVKG.

The interval 1–224 (MTIPATYAAI…ERILGDAMDI (224 aa)) is 2-C-methyl-D-erythritol 4-phosphate cytidylyltransferase. The segment at 225–380 (RLGNGFDVHA…SIATATLVKG (156 aa)) is 2-C-methyl-D-erythritol 2,4-cyclodiphosphate synthase. A divalent metal cation is bound by residues Asp-231 and His-233. 4-CDP-2-C-methyl-D-erythritol 2-phosphate is bound by residues 231–233 (DVH) and 257–258 (HS). A divalent metal cation is bound at residue His-265. 4-CDP-2-C-methyl-D-erythritol 2-phosphate contacts are provided by residues 279–281 (DIG), 355–358 (TTSE), Phe-362, and Arg-365.

The protein in the N-terminal section; belongs to the IspD/TarI cytidylyltransferase family. IspD subfamily. In the C-terminal section; belongs to the IspF family. A divalent metal cation serves as cofactor.

The enzyme catalyses 2-C-methyl-D-erythritol 4-phosphate + CTP + H(+) = 4-CDP-2-C-methyl-D-erythritol + diphosphate. It carries out the reaction 4-CDP-2-C-methyl-D-erythritol 2-phosphate = 2-C-methyl-D-erythritol 2,4-cyclic diphosphate + CMP. It participates in isoprenoid biosynthesis; isopentenyl diphosphate biosynthesis via DXP pathway; isopentenyl diphosphate from 1-deoxy-D-xylulose 5-phosphate: step 2/6. Its pathway is isoprenoid biosynthesis; isopentenyl diphosphate biosynthesis via DXP pathway; isopentenyl diphosphate from 1-deoxy-D-xylulose 5-phosphate: step 4/6. In terms of biological role, bifunctional enzyme that catalyzes the formation of 4-diphosphocytidyl-2-C-methyl-D-erythritol from CTP and 2-C-methyl-D-erythritol 4-phosphate (MEP) (IspD), and catalyzes the conversion of 4-diphosphocytidyl-2-C-methyl-D-erythritol 2-phosphate (CDP-ME2P) to 2-C-methyl-D-erythritol 2,4-cyclodiphosphate (ME-CPP) with a corresponding release of cytidine 5-monophosphate (CMP) (IspF). The polypeptide is Bifunctional enzyme IspD/IspF (Paracoccus denitrificans (strain Pd 1222)).